We begin with the raw amino-acid sequence, 397 residues long: Phosphoglycerate kinase (397 aa).

Residues 21–23, arginine 37, 60–63, arginine 119, and arginine 152 each bind substrate; these read DFN and HLGR. Residues lysine 203, glycine 294, glutamate 325, and 354–357 contribute to the ATP site; that span reads GGDS.

It belongs to the phosphoglycerate kinase family. In terms of assembly, monomer.

Its subcellular location is the cytoplasm. It carries out the reaction (2R)-3-phosphoglycerate + ATP = (2R)-3-phospho-glyceroyl phosphate + ADP. The protein operates within carbohydrate degradation; glycolysis; pyruvate from D-glyceraldehyde 3-phosphate: step 2/5. The polypeptide is Phosphoglycerate kinase (Chlorobium luteolum (strain DSM 273 / BCRC 81028 / 2530) (Pelodictyon luteolum)).